A 465-amino-acid polypeptide reads, in one-letter code: Serine/threonine-protein kinase AtPK1/AtPK6 (465 aa).

The LVxCxE motif signature appears at 91 to 96 (LVECLE). The region spanning 134–389 (FEVMKVVGKG…AEEIKQHKWF (256 aa)) is the Protein kinase domain. Residues 140–148 (VGKGAFGKV) and lysine 163 each bind ATP. Aspartate 257 serves as the catalytic Proton acceptor. The activation loop stretch occupies residues 275–301 (DFGLAKEFEENTRSNSMCGTTEYMAPE). Serine 290 is subject to Phosphoserine; by PDPK1. The AGC-kinase C-terminal domain maps to 390–460 (KGINWKKLEA…VRPPPSFLHQ (71 aa)). Threonine 449 carries the phosphothreonine; by TOR modification.

It belongs to the protein kinase superfamily. AGC Ser/Thr protein kinase family. S6 kinase subfamily. Interacts with RAPTOR1. Interacts with RBR1-E2FB complex through its LVxCxE motif. Interacts with TAP46. Binds to MRF1. Post-translationally, undergoes serine-specific autophosphorylation. Phosphorylated at Thr-449 by TOR. Expressed in all tissues.

It is found in the cytoplasm. It localises to the nucleus. It catalyses the reaction L-seryl-[protein] + ATP = O-phospho-L-seryl-[protein] + ADP + H(+). The catalysed reaction is L-threonyl-[protein] + ATP = O-phospho-L-threonyl-[protein] + ADP + H(+). Activated by PDK1. Repressed during osmotic stress. Functionally, downstream effector of TOR signaling pathway involved in osmotic stress response. Could be involved in the control of plant growth and development. Phosphorylates the ribosomal proteins P14, P16 and S6. Functions as a repressor of cell proliferation and required for maintenance of chromosome stability and ploidy levels through the RBR1-E2F pathway. Mediates the phosphorylation of MRFs (e.g. MRF1). The chain is Serine/threonine-protein kinase AtPK1/AtPK6 from Arabidopsis thaliana (Mouse-ear cress).